A 132-amino-acid chain; its full sequence is Small ribosomal subunit protein uS8 (132 aa).

It belongs to the universal ribosomal protein uS8 family. In terms of assembly, part of the 30S ribosomal subunit. Contacts proteins S5 and S12.

Functionally, one of the primary rRNA binding proteins, it binds directly to 16S rRNA central domain where it helps coordinate assembly of the platform of the 30S subunit. This chain is Small ribosomal subunit protein uS8, found in Streptococcus pyogenes serotype M49 (strain NZ131).